Consider the following 244-residue polypeptide: Large ribosomal subunit protein uL2 (244 aa).

Over residues 1–12 (MGKRILVQRRGR) the composition is skewed to basic residues. Disordered regions lie at residues 1-26 (MGKR…KRDG) and 193-225 (AMSP…KVGF).

This sequence belongs to the universal ribosomal protein uL2 family. Part of the 50S ribosomal subunit. Forms a bridge to the 30S subunit in the 70S ribosome.

Its function is as follows. One of the primary rRNA binding proteins. Required for association of the 30S and 50S subunits to form the 70S ribosome, for tRNA binding and peptide bond formation. It has been suggested to have peptidyltransferase activity; this is somewhat controversial. Makes several contacts with the 16S rRNA in the 70S ribosome. The protein is Large ribosomal subunit protein uL2 of Pyrobaculum calidifontis (strain DSM 21063 / JCM 11548 / VA1).